Reading from the N-terminus, the 166-residue chain is Large ribosomal subunit protein uL10 (166 aa).

This sequence belongs to the universal ribosomal protein uL10 family. In terms of assembly, part of the ribosomal stalk of the 50S ribosomal subunit. The N-terminus interacts with L11 and the large rRNA to form the base of the stalk. The C-terminus forms an elongated spine to which L12 dimers bind in a sequential fashion forming a multimeric L10(L12)X complex.

In terms of biological role, forms part of the ribosomal stalk, playing a central role in the interaction of the ribosome with GTP-bound translation factors. The sequence is that of Large ribosomal subunit protein uL10 from Shewanella baltica (strain OS223).